We begin with the raw amino-acid sequence, 504 residues long: Probable ergothioneine transporter EgtUBC (504 aa).

Positions 19–198 (LVQHIQISFV…LLAILFDFLL (180 aa)) constitute an ABC transmembrane type-1 domain. The next 6 helical transmembrane spans lie at 25-44 (ISFV…GIYL), 57-74 (VAAI…GLLI), 81-97 (IVPA…LPIL), 146-170 (MVLI…LILL), 179-198 (LILL…DFLL), and 210-229 (IITI…VPYF). The ergothioneine binding domain stretch occupies residues 231 to 504 (SDKKEITIAG…DYLKDQGIIK (274 aa)).

This sequence in the N-terminal section; belongs to the binding-protein-dependent transport system permease family. In the C-terminal section; belongs to the OsmX family. In terms of assembly, the complex is probably composed of at least an ATP-binding protein (EgtUA) and a transmembrane protein (EgtUBC).

It is found in the membrane. Functionally, part of an ABC transporter complex EgtU required for the uptake of ergothioneine (EGT), a natural low-molecular weight (LMW) thiol antioxidant. Responsible for the translocation of the substrate across the membrane. Also contains a C-terminal periplasmic solute-binding domain (SBD) which binds to EGT with sub-micromolar affinity. Does not bind glycine betaine, carnitine, choline, proline, or cholate. Plays a role in bile acid tolerance. Dispensable for choline uptake. Probably not involved in betaine, carnitine or choline mediated osmo- or chill tolerance. Plays a role in enhancing virulence in mice. The protein is Probable ergothioneine transporter EgtUBC of Listeria monocytogenes serovar 1/2a (strain ATCC BAA-679 / EGD-e).